We begin with the raw amino-acid sequence, 100 residues long: Small ribosomal subunit protein uS14c (100 aa).

Belongs to the universal ribosomal protein uS14 family. As to quaternary structure, part of the 30S ribosomal subunit.

Its subcellular location is the plastid. It localises to the chloroplast. Binds 16S rRNA, required for the assembly of 30S particles. The sequence is that of Small ribosomal subunit protein uS14c from Chlorella vulgaris (Green alga).